The chain runs to 658 residues: Heat shock protein homolog SSE1 (658 aa).

The span at 614–627 (KRKEEERKSKKENA) shows a compositional bias: basic and acidic residues. The segment at 614 to 658 (KRKEEERKSKKENAQEGTSSKPESKEESEAKEDNDEESDVASIDE) is disordered. Acidic residues predominate over residues 642–658 (EAKEDNDEESDVASIDE).

This sequence belongs to the heat shock protein 70 family.

Its subcellular location is the cytoplasm. In terms of biological role, required for normal growth at various temperatures. The polypeptide is Heat shock protein homolog SSE1 (SSE1) (Encephalitozoon cuniculi (strain GB-M1) (Microsporidian parasite)).